The following is a 259-amino-acid chain: Deoxyribose-phosphate aldolase (259 aa).

Aspartate 101 functions as the Proton donor/acceptor in the catalytic mechanism. Catalysis depends on lysine 166, which acts as the Schiff-base intermediate with acetaldehyde. Residue lysine 200 is the Proton donor/acceptor of the active site.

Belongs to the DeoC/FbaB aldolase family. DeoC type 2 subfamily.

It is found in the cytoplasm. It carries out the reaction 2-deoxy-D-ribose 5-phosphate = D-glyceraldehyde 3-phosphate + acetaldehyde. Its pathway is carbohydrate degradation; 2-deoxy-D-ribose 1-phosphate degradation; D-glyceraldehyde 3-phosphate and acetaldehyde from 2-deoxy-alpha-D-ribose 1-phosphate: step 2/2. In terms of biological role, catalyzes a reversible aldol reaction between acetaldehyde and D-glyceraldehyde 3-phosphate to generate 2-deoxy-D-ribose 5-phosphate. This is Deoxyribose-phosphate aldolase from Glaesserella parasuis serovar 5 (strain SH0165) (Haemophilus parasuis).